Here is a 296-residue protein sequence, read N- to C-terminus: UDP-N-acetylglucosamine transporter TMEM241 homolog (296 aa).

10 helical membrane passes run 7-29, 41-61, 67-87, 93-113, 126-146, 147-167, 187-207, 217-237, 248-266, and 272-291; these read AVGL…VLSV, WQTL…WLEI, SDVV…YAGS, LPIP…YGFQ, IFSI…DPQF, DADG…YKVF, VFSV…ISAL, FHSG…ASVK, ASWN…LIYF, and VPLT…LVYA.

Belongs to the nucleotide-sugar transporter family. SLC35A subfamily.

It is found in the golgi apparatus. Its subcellular location is the cis-Golgi network membrane. Its function is as follows. Golgi-localized UDP-N-acetylglucosamine (UDP-GlcNAc) transporter that transports UDP-N-acetylglucosamine into Golgi lumen. The sequence is that of UDP-N-acetylglucosamine transporter TMEM241 homolog (tmem241) from Xenopus laevis (African clawed frog).